Here is a 344-residue protein sequence, read N- to C-terminus: Serine/arginine-rich splicing factor 6 (344 aa).

The region spanning 1–72 (MPRVYIGRLS…ERVIVEHARG (72 aa)) is the RRM 1 domain. Residues serine 45, serine 81, and serine 84 each carry the phosphoserine modification. The tract at residues 75-103 (RDRDGYSYGSRSGGGGYSSRRTSGRDKYG) is disordered. Positions 110–183 (YRLIVENLSS…RNIRLIEDKP (74 aa)) constitute an RRM 2 domain. At lysine 165 the chain carries N6-acetyllysine. The interval 176 to 344 (IRLIEDKPRT…RSRSRSSSRD (169 aa)) is disordered. Residue lysine 182 forms a Glycyl lysine isopeptide (Lys-Gly) (interchain with G-Cter in SUMO2) linkage. The segment covering 185–250 (TSHRRSYSGS…RKSRSKSKSK (66 aa)) has biased composition (basic residues). Composition is skewed to basic and acidic residues over residues 264 to 273 (RSKDEYEKSR) and 280 to 291 (SPKENGKGDIKS). Residues serine 297 and serine 299 each carry the phosphoserine modification. A Phosphoserine; by DYRK1A modification is found at serine 303. A phosphoserine mark is found at serine 314 and serine 316. A compositionally biased stretch (basic residues) spans 322–344 (ATSRSRSRSRSKSRSRSRSSSRD).

The protein belongs to the splicing factor SR family. In terms of assembly, binds SREK1/SFRS12. Interacts with DYRK1A. Extensively phosphorylated on serine residues in the RS domain. Phosphorylated by DYRK1A, probably in the RS domain. Phosphorylation by DYRK1A modulates alternative splice site selection and inhibits the expression of MAPT/Tau exon 10.

It is found in the nucleus. It localises to the nucleus speckle. In terms of biological role, plays a role in constitutive splicing and modulates the selection of alternative splice sites. Plays a role in the alternative splicing of MAPT/Tau exon 10. Binds to alternative exons of TNC pre-mRNA and promotes the expression of alternatively spliced TNC. Plays a role in wound healing and in the regulation of keratinocyte differentiation and proliferation via its role in alternative splicing. In Homo sapiens (Human), this protein is Serine/arginine-rich splicing factor 6 (SRSF6).